Here is a 130-residue protein sequence, read N- to C-terminus: S-adenosylmethionine decarboxylase proenzyme (130 aa).

Catalysis depends on serine 64, which acts as the Schiff-base intermediate with substrate; via pyruvic acid. At serine 64 the chain carries Pyruvic acid (Ser); by autocatalysis. Histidine 69 acts as the Proton acceptor; for processing activity in catalysis. Residue cysteine 84 is the Proton donor; for catalytic activity of the active site.

Belongs to the prokaryotic AdoMetDC family. Type 1 subfamily. In terms of assembly, heterotetramer of two alpha and two beta chains arranged as a dimer of alpha/beta heterodimers. The cofactor is pyruvate. Post-translationally, is synthesized initially as an inactive proenzyme. Formation of the active enzyme involves a self-maturation process in which the active site pyruvoyl group is generated from an internal serine residue via an autocatalytic post-translational modification. Two non-identical subunits are generated from the proenzyme in this reaction, and the pyruvate is formed at the N-terminus of the alpha chain, which is derived from the carboxyl end of the proenzyme. The post-translation cleavage follows an unusual pathway, termed non-hydrolytic serinolysis, in which the side chain hydroxyl group of the serine supplies its oxygen atom to form the C-terminus of the beta chain, while the remainder of the serine residue undergoes an oxidative deamination to produce ammonia and the pyruvoyl group blocking the N-terminus of the alpha chain.

It carries out the reaction S-adenosyl-L-methionine + H(+) = S-adenosyl 3-(methylsulfanyl)propylamine + CO2. It participates in amine and polyamine biosynthesis; S-adenosylmethioninamine biosynthesis; S-adenosylmethioninamine from S-adenosyl-L-methionine: step 1/1. In terms of biological role, catalyzes the decarboxylation of S-adenosylmethionine to S-adenosylmethioninamine (dcAdoMet), the propylamine donor required for the synthesis of the polyamines spermine and spermidine from the diamine putrescine. This Thermoplasma volcanium (strain ATCC 51530 / DSM 4299 / JCM 9571 / NBRC 15438 / GSS1) protein is S-adenosylmethionine decarboxylase proenzyme.